Reading from the N-terminus, the 215-residue chain is Ependymin-1 (215 aa).

Positions methionine 1–alanine 20 are cleaved as a signal peptide. 2 N-linked (GlcNAc...) asparagine glycosylation sites follow: asparagine 71 and asparagine 94.

It belongs to the ependymin family. Forms disulfide-linked dimers. Different glycosylation variants are known as EPD-beta and EPD-gamma. Post-translationally, binds calcium through the terminal sialic acids. In terms of tissue distribution, EPDs are synthesized in the meninx and secreted in the cerebrospinal fluid.

It is found in the secreted. May play a role in neural plasticity. May be involved during axon regeneration. The sequence is that of Ependymin-1 (epd1) from Carassius auratus (Goldfish).